We begin with the raw amino-acid sequence, 78 residues long: Conotoxin 6 (78 aa).

An N-terminal signal peptide occupies residues 1-22; the sequence is MKLTCMMIVAVLFLTAWIFITA. The propeptide occupies 23-51; the sequence is DNSRNGIENLPRMRRHEMKNPKASKLNKR. Intrachain disulfides connect C53–C69, C60–C73, and C68–C77.

The protein belongs to the conotoxin O1 superfamily. As to expression, expressed by the venom duct.

It localises to the secreted. This Conus imperialis (Imperial cone) protein is Conotoxin 6.